Here is a 249-residue protein sequence, read N- to C-terminus: EID1-like F-box protein 2 (249 aa).

The F-box domain occupies 16–68 (HCTKGHLSEEVLFLMVQHLNWNPNVIATLSCVCKWFDDLAKRLLWKEFCRARA).

The chain is EID1-like F-box protein 2 (EDL2) from Arabidopsis thaliana (Mouse-ear cress).